The following is a 359-amino-acid chain: Phosphoserine aminotransferase (359 aa).

Position 41 (Arg-41) interacts with L-glutamate. Pyridoxal 5'-phosphate is bound by residues Ala-75 to Ser-76, Trp-101, Thr-152, Asp-171, and Gln-194. N6-(pyridoxal phosphate)lysine is present on Lys-195. Position 236 to 237 (Asn-236 to Thr-237) interacts with pyridoxal 5'-phosphate.

It belongs to the class-V pyridoxal-phosphate-dependent aminotransferase family. SerC subfamily. In terms of assembly, homodimer. The cofactor is pyridoxal 5'-phosphate.

It is found in the cytoplasm. The enzyme catalyses O-phospho-L-serine + 2-oxoglutarate = 3-phosphooxypyruvate + L-glutamate. The catalysed reaction is 4-(phosphooxy)-L-threonine + 2-oxoglutarate = (R)-3-hydroxy-2-oxo-4-phosphooxybutanoate + L-glutamate. Its pathway is amino-acid biosynthesis; L-serine biosynthesis; L-serine from 3-phospho-D-glycerate: step 2/3. It participates in cofactor biosynthesis; pyridoxine 5'-phosphate biosynthesis; pyridoxine 5'-phosphate from D-erythrose 4-phosphate: step 3/5. Its function is as follows. Catalyzes the reversible conversion of 3-phosphohydroxypyruvate to phosphoserine and of 3-hydroxy-2-oxo-4-phosphonooxybutanoate to phosphohydroxythreonine. This is Phosphoserine aminotransferase from Acinetobacter baumannii (strain AB307-0294).